A 185-amino-acid polypeptide reads, in one-letter code: Small ribosomal subunit protein uS5 (185 aa).

An S5 DRBM domain is found at 18-81 (FVDKLVHINR…ESAKRALIRV (64 aa)).

It belongs to the universal ribosomal protein uS5 family. Part of the 30S ribosomal subunit. Contacts proteins S4 and S8.

With S4 and S12 plays an important role in translational accuracy. In terms of biological role, located at the back of the 30S subunit body where it stabilizes the conformation of the head with respect to the body. This chain is Small ribosomal subunit protein uS5, found in Azorhizobium caulinodans (strain ATCC 43989 / DSM 5975 / JCM 20966 / LMG 6465 / NBRC 14845 / NCIMB 13405 / ORS 571).